Reading from the N-terminus, the 440-residue chain is Replication factor C large subunit (440 aa).

48–55 (GPPGVGKT) lines the ATP pocket.

Belongs to the activator 1 small subunits family. RfcL subfamily. In terms of assembly, heteromultimer composed of small subunits (RfcS) and large subunits (RfcL).

Its function is as follows. Part of the RFC clamp loader complex which loads the PCNA sliding clamp onto DNA. This chain is Replication factor C large subunit, found in Sulfurisphaera tokodaii (strain DSM 16993 / JCM 10545 / NBRC 100140 / 7) (Sulfolobus tokodaii).